We begin with the raw amino-acid sequence, 215 residues long: Pyrrolidone-carboxylate peptidase (215 aa).

Catalysis depends on residues Glu-78, Cys-141, and His-165.

Belongs to the peptidase C15 family. In terms of assembly, homotetramer.

It localises to the cytoplasm. It carries out the reaction Release of an N-terminal pyroglutamyl group from a polypeptide, the second amino acid generally not being Pro.. Removes 5-oxoproline from various penultimate amino acid residues except L-proline. This chain is Pyrrolidone-carboxylate peptidase, found in Lacticaseibacillus paracasei (strain ATCC 334 / BCRC 17002 / CCUG 31169 / CIP 107868 / KCTC 3260 / NRRL B-441) (Lactobacillus paracasei).